We begin with the raw amino-acid sequence, 92 residues long: Small ribosomal subunit protein uS19 (92 aa).

It belongs to the universal ribosomal protein uS19 family.

Its function is as follows. Protein S19 forms a complex with S13 that binds strongly to the 16S ribosomal RNA. This chain is Small ribosomal subunit protein uS19, found in Nitrobacter hamburgensis (strain DSM 10229 / NCIMB 13809 / X14).